The primary structure comprises 203 residues: Orotate phosphoribosyltransferase (203 aa).

5-phospho-alpha-D-ribose 1-diphosphate contacts are provided by residues arginine 94, lysine 98, histidine 100, and 120 to 128; that span reads EDLISTGGS. Orotate is bound at residue serine 124.

Belongs to the purine/pyrimidine phosphoribosyltransferase family. PyrE subfamily. Homodimer. It depends on Mg(2+) as a cofactor.

It carries out the reaction orotidine 5'-phosphate + diphosphate = orotate + 5-phospho-alpha-D-ribose 1-diphosphate. It participates in pyrimidine metabolism; UMP biosynthesis via de novo pathway; UMP from orotate: step 1/2. Functionally, catalyzes the transfer of a ribosyl phosphate group from 5-phosphoribose 1-diphosphate to orotate, leading to the formation of orotidine monophosphate (OMP). This is Orotate phosphoribosyltransferase from Staphylococcus aureus (strain Mu50 / ATCC 700699).